Consider the following 54-residue polypeptide: H-bracotoxin-Cf4 (54 aa).

A signal peptide spans 1-21; it reads MSKLFIFFLLVALLAFVSSEA. Intrachain disulfides connect cysteine 24/cysteine 39, cysteine 31/cysteine 43, and cysteine 38/cysteine 53.

In terms of tissue distribution, expressed by the venom duct.

Its subcellular location is the secreted. Functionally, this endoparasitoid wasp peptide has a role in disruption of the cellular host immune response, since it reduces the capacity of D.saccharalis hemocytes to encapsulate foreign bodies. On the other hand, it shows no effect on the humoral immune response, since it has no effect on phenoloxidase activity. This Cotesia flavipes (Parasitic wasp) protein is H-bracotoxin-Cf4.